A 466-amino-acid chain; its full sequence is Cysteine--tRNA ligase (466 aa).

Cysteine 27 is a binding site for Zn(2+). The 'HIGH' region signature appears at 29–39 (PTVYDDAHLGH). Positions 208, 238, and 242 each coordinate Zn(2+). The 'KMSKS' region signature appears at 270-274 (KMSKS). Lysine 273 is a binding site for ATP.

It belongs to the class-I aminoacyl-tRNA synthetase family. Monomer. It depends on Zn(2+) as a cofactor.

The protein localises to the cytoplasm. It carries out the reaction tRNA(Cys) + L-cysteine + ATP = L-cysteinyl-tRNA(Cys) + AMP + diphosphate. The sequence is that of Cysteine--tRNA ligase from Sulfurimonas denitrificans (strain ATCC 33889 / DSM 1251) (Thiomicrospira denitrificans (strain ATCC 33889 / DSM 1251)).